Here is a 293-residue protein sequence, read N- to C-terminus: Diaminopimelate epimerase (293 aa).

Substrate is bound by residues Asn-15, Gln-47, and Asn-67. Cys-76 acts as the Proton donor in catalysis. Substrate-binding positions include 77-78, Asn-163, Asn-197, and 215-216; these read GN and ER. Cys-224 (proton acceptor) is an active-site residue. Position 225-226 (225-226) interacts with substrate; it reads GS.

It belongs to the diaminopimelate epimerase family. In terms of assembly, homodimer.

The protein localises to the cytoplasm. The enzyme catalyses (2S,6S)-2,6-diaminopimelate = meso-2,6-diaminopimelate. It participates in amino-acid biosynthesis; L-lysine biosynthesis via DAP pathway; DL-2,6-diaminopimelate from LL-2,6-diaminopimelate: step 1/1. Functionally, catalyzes the stereoinversion of LL-2,6-diaminopimelate (L,L-DAP) to meso-diaminopimelate (meso-DAP), a precursor of L-lysine and an essential component of the bacterial peptidoglycan. In Chelativorans sp. (strain BNC1), this protein is Diaminopimelate epimerase.